Consider the following 249-residue polypeptide: Capsid protein (249 aa).

Residues 1-33 form a disordered region; that stretch reads MDTDGDNDVFGSGNDTRNNDDKKKEEMKQNISD. Basic and acidic residues predominate over residues 17 to 28; it reads RNNDDKKKEEMK.

This sequence belongs to the closteroviridae capsid protein family.

The protein localises to the virion. Capsid protein self-assembles to form filamentous capsids, about 650-850 nm in length. In Beta vulgaris (Sugar beet), this protein is Capsid protein.